The sequence spans 989 residues: Putative transcription elongation factor SPT5 homolog 2 (989 aa).

The span at 1–26 shows a compositional bias: acidic residues; it reads MSQYSDDDYSHEDDSEMEDEDEEDEY. The segment at 1–82 is disordered; that stretch reads MSQYSDDDYS…VEDDDDDVDV (82 aa). A compositionally biased stretch (basic residues) spans 31 to 42; it reads SRKGRSGKKRGR. The segment covering 65 to 82 has biased composition (acidic residues); it reads WEVEVDDDVEDDDDDVDV. KOW domains follow at residues 260-287, 412-439, 464-491, 588-615, and 683-710; these read DLSR…VDNV, HFMK…VDEE, YFEP…VDQH, VVAV…IYKG, and DHLV…VKDK. The interval 790–852 is disordered; it reads MSPPRDNWED…SPMTPSSTSY (63 aa). The span at 842–852 shows a compositional bias: low complexity; sequence PSPMTPSSTSY. The KOW 6 domain maps to 936–963; that stretch reads CPKKNERVKILGGKYCGSTAKVIGEDGQ.

It belongs to the SPT5 family.

The protein localises to the nucleus. Functionally, may regulate transcription elongation by RNA polymerase II. May enhance transcriptional pausing at sites proximal to the promoter, which may in turn facilitate the assembly of an elongation competent RNA polymerase II complex. The chain is Putative transcription elongation factor SPT5 homolog 2 from Arabidopsis thaliana (Mouse-ear cress).